A 634-amino-acid polypeptide reads, in one-letter code: Ras and EF-hand domain-containing protein homolog (634 aa).

EF-hand domains lie at 5 to 33 (DVENLFSLCDSESKGFLTMEDLKKVCPQL) and 33 to 68 (LDDNDLRFIFNELDRDGSGKIEKMEFLQGFQETVQH). Ca(2+)-binding residues include aspartate 46, aspartate 48, serine 50, lysine 52, and glutamate 57. Residues 169–310 (LSEKKHENER…RADFDQKQDE (142 aa)) are a coiled coil. 2 disordered regions span residues 216-237 (ERERLTKEKEEMRERMSEEMSE) and 308-328 (QDELSARRDQASHATEESESV). Residues 449–454 (AVGKSS), 552–555 (NKVD), and 585–586 (AL) contribute to the GTP site. Positions 632 to 634 (RGS) are cleaved as a propeptide — removed in mature form.

It belongs to the small GTPase superfamily. Rab family. As to quaternary structure, homodimer.

The protein localises to the cytoplasm. Its subcellular location is the perinuclear region. Functionally, binds GTP and GDP. Plays a role in uterine seam cell development. The chain is Ras and EF-hand domain-containing protein homolog from Caenorhabditis briggsae.